Here is a 271-residue protein sequence, read N- to C-terminus: Proteasome inhibitor PI31 subunit (271 aa).

The residue at position 2 (Ala-2) is an N-acetylalanine. The tract at residues 2-150 (AGLEVLFASA…PIHEQWEKVR (149 aa)) is important for homodimerization and interaction with FBXO7. A phosphoserine mark is found at Ser-153 and Ser-189. Residue Arg-205 is modified to Omega-N-methylarginine. An Asymmetric dimethylarginine modification is found at Arg-219. The tract at residues 221–271 (LIDPSSGLPNRLPPGAVPPGARFDPFGPIGTSPSGPNPDHLPPPGYDDMYL) is disordered. At Arg-231 the chain carries Omega-N-methylarginine. Ser-252 carries the post-translational modification Phosphoserine. Over residues 255 to 265 (GPNPDHLPPPG) the composition is skewed to pro residues.

Belongs to the proteasome inhibitor PI31 family. As to quaternary structure, monomer and homodimer. Interacts with FBXO7.

It is found in the cytoplasm. Its subcellular location is the endoplasmic reticulum. Functionally, plays an important role in control of proteasome function. Inhibits the hydrolysis of protein and peptide substrates by the 20S proteasome. Also inhibits the activation of the proteasome by the proteasome regulatory proteins PA700 and PA28. This Rattus norvegicus (Rat) protein is Proteasome inhibitor PI31 subunit (Psmf1).